A 520-amino-acid chain; its full sequence is MTPIMMVLISILLILLGLVVGYFVRKTIAEAKIAGARGAAEQILEDAKRDAEALKKEALLEAKDEIHKLRIDAEQEVRERRNELQKQENRLLQKEENLDRKHEGIDKREAMLEKKDHSLNERQQHIEEMESKVDEMIRMQQSELERISSLTRDEAKQIILERVENELSHDIAIMTKETENRAKEEADKKAKNILSLALQRCAADHVAETTVSVVNLPNDEMKGRIIGREGRNIRTLETLTGIDLIIDDTPEAVILSGFDPIRRETARIALDKLVQDGRIHPARIEEMVEKSRREVDDYIREMGEQTTFEVGVHGLHPDLIKILGRLKFRTSYGQNVLKHSMEVAFLAGLMASELGEDAKLAKRAGLLHDIGKAIDHEVEGSHVEIGVELATKYKEHPVVINSIASHHGDEEPTSIIAVLVAAADALSAARPGARSETLENYIRRLEKLEEISESYEGVEKSFAIQAGREVRIMVKPDSINDLEAHRLARDIRKRIEDELDYPGHIKVTVIRETRAVEYAK.

The Extracellular portion of the chain corresponds to 1-3 (MTP). The chain crosses the membrane as a helical span at residues 4–24 (IMMVLISILLILLGLVVGYFV). Residues 25–520 (RKTIAEAKIA…RETRAVEYAK (496 aa)) lie on the Cytoplasmic side of the membrane. The stretch at 29–141 (AEAKIAGARG…KVDEMIRMQQ (113 aa)) forms a coiled coil. Residues 210 to 273 (TVSVVNLPND…ETARIALDKL (64 aa)) enclose the KH domain. The HD domain maps to 336–429 (VLKHSMEVAF…VAAADALSAA (94 aa)).

This sequence belongs to the RNase Y family. As to quaternary structure, homodimer. Component of a possible RNA degradosome complex composed of rny, rnjA, rnjB, pnp, pfkA and eno (although rnjA and rnjB's presence is unclear). Interacts with RNA helicase CshA which may also be a member of the RNA degradosome complex. Interacts with full-length dynamin-like protein DynA. Requires Mg(2+) as cofactor. The cofactor is Mn(2+). It depends on Zn(2+) as a cofactor.

It localises to the cell membrane. With respect to regulation, shows preference for transcripts carrying a monophosphate group at the 5' end. In terms of biological role, endoribonuclease that initiates mRNA decay. Initiates the decay of all SAM-dependent riboswitches, such as yitJ riboswitch. Involved in processing of the gapA operon mRNA, it cleaves between cggR and gapA. Is also the decay-initiating endonuclease for rpsO mRNA. Involved in degradation of type I toxin-antitoxin system bsrG/SR4 RNAs and a minor role in degradation of type I toxin-antitoxin system bsrE/SR5 degradation. This Bacillus subtilis (strain 168) protein is Ribonuclease Y (rny).